The sequence spans 72 residues: UPF0346 protein GTNG_1419 (72 aa).

Belongs to the UPF0346 family.

The sequence is that of UPF0346 protein GTNG_1419 from Geobacillus thermodenitrificans (strain NG80-2).